Here is a 209-residue protein sequence, read N- to C-terminus: Ion-translocating oxidoreductase complex subunit G (209 aa).

A helical membrane pass occupies residues 9 to 29; the sequence is GITLAIFAALTTGLTAVVNSL. T175 carries the post-translational modification FMN phosphoryl threonine.

It belongs to the RnfG family. The complex is composed of six subunits: RnfA, RnfB, RnfC, RnfD, RnfE and RnfG. FMN serves as cofactor.

It is found in the cell inner membrane. Part of a membrane-bound complex that couples electron transfer with translocation of ions across the membrane. This Photorhabdus laumondii subsp. laumondii (strain DSM 15139 / CIP 105565 / TT01) (Photorhabdus luminescens subsp. laumondii) protein is Ion-translocating oxidoreductase complex subunit G.